The chain runs to 261 residues: U11/U12 small nuclear ribonucleoprotein 31 kDa protein (261 aa).

The tract at residues 18–51 is disordered; that stretch reads YYRYSSVAAPPPSNPKHQPSSSAKSSAPGGGSGG. Residues 57–135 form the RRM domain; it reads STLYVSNLDF…RKLTVSIAAD (79 aa). The CCHC-type zinc-finger motif lies at 153-169; sequence RCYECGDEGHLSYECPK. The disordered stretch occupies residues 165-261; it reads YECPKNQLGP…YFSDESDDED (97 aa). Basic and acidic residues predominate over residues 226–235; the sequence is AGERLRKREA.

Component of the U11/U12 snRNPs that are part of the U12-type spliceosome. In terms of tissue distribution, ubiquitous. Abundantly expressed in the shoot apical neristem.

It is found in the nucleus. In terms of biological role, RNA chaperone required for proper U12 intron splicing and for normal growth and development of plants. Mainly responsible for meristem activity. Plays a role in regulating cell division. This Arabidopsis thaliana (Mouse-ear cress) protein is U11/U12 small nuclear ribonucleoprotein 31 kDa protein (SNRNP31).